The sequence spans 1077 residues: MKLLYTDINHDMTEILVNQAAHAAEAGWRIFYIAPNSLSFEKERAVLENLPQEASFAITITRFAQLARYFTLNQPNQKESLNDIGLAMIFYRALASFEDGQLKVFGRLKQDASFISQLVDLYKELQTANLSILELKYLHSPEKFEDLLAIFLVVSDLLREGEYDNQSKIAFFTEQVRSGQLDVDLKNTILIVDGFTRFSAEEEALIKSLSSRCQEIIIGAYASQKAYKANFTNGNIYSAGVDFLRYLATTFQTKPEFILSKWESKSGFEMISKNIEGKHDFTNSSHILDDTAKDCITIWECINQKDEVEHVARAIRQKLYQGYRYKDILVLLGDVDSYKLQLSKIFEQYDIPYYFGKAETMAAHPLVHFMDSLSRIKRYRFRAEDVLNLFKTGIYGEISQDDLDYFEAYISYADIKGPKKFFTDFVVGAKKFDLGRLNTIRQSLLTPLESFVKTKKQDGIKTLNQFMFFLTQVGLSDNLSRLVGQMSENEQEKHQEVWKTFTDILEQFQTIFGQEKLNLDEFLSLLNSGMMQAEYRMVPATVDVVTVKSYDLVEPHSNQFVYALGMTQSHFPKIAQNKSLISDIERQLINDANDTDGHFDIMTQENLKKNHFAALSLFNAAKQELVLTIPQLLNESEDQMSPYLVELRDIGVPFNHKGRQSLKEEADNIGNYKALLSRVVDLYRSAIDKEMTKEEQTFWSVAVRYLRRQLTSKGIEIPIITDSLDTVTVSSDVMTRRFPEDDPLKLSSSALTTFYNNQYKYFLQYVLGLEEQDSIHPDMRHHGTYLHRVFEILMKNQGIESFEEKLNSAINKTNQEDVFKSLYSEDAESRYSLEILEDIARATATILRQDSQMTVESEEERFELMIDNTIKINGIIDRIDRLSDGSLGVVDYKSSAQKFDIQKFYNGLSPQLVTYIDAISRDKEVEQKPPIFGAMYLHMQEPRQDLSKIKNLDDLVTKNHQALTYKGLFSEAEKEFLANGKYHLKDSLYSETEIAILQAHNQSLYKKASETIKSGKFLINPYTEDAKTVDGDQFKSITGFEADRHMARARALYKLPAKEKRQGFLTLMQQEEENDDL.

The protein belongs to the helicase family. AddB/RexB type 2 subfamily. In terms of assembly, heterodimer of AddA and RexB. Mg(2+) is required as a cofactor.

In terms of biological role, the heterodimer acts as both an ATP-dependent DNA helicase and an ATP-dependent, dual-direction single-stranded exonuclease. Recognizes the chi site generating a DNA molecule suitable for the initiation of homologous recombination. This subunit has 5' -&gt; 3' nuclease activity but not helicase activity. The chain is ATP-dependent helicase/deoxyribonuclease subunit B from Streptococcus agalactiae serotype Ia (strain ATCC 27591 / A909 / CDC SS700).